The primary structure comprises 99 residues: Integration host factor subunit alpha (99 aa).

Residues Asn51 to Ile71 form a disordered region.

The protein belongs to the bacterial histone-like protein family. In terms of assembly, heterodimer of an alpha and a beta chain.

Functionally, this protein is one of the two subunits of integration host factor, a specific DNA-binding protein that functions in genetic recombination as well as in transcriptional and translational control. In Dickeya dadantii (strain 3937) (Erwinia chrysanthemi (strain 3937)), this protein is Integration host factor subunit alpha (ihfA).